The primary structure comprises 351 residues: tRNA-specific 2-thiouridylase MnmA (351 aa).

Position 6 to 13 (6 to 13 (ALSGGTDS)) interacts with ATP. The active-site Nucleophile is C96. A disulfide bridge connects residues C96 and C193. G120 serves as a coordination point for ATP. An interaction with tRNA region spans residues 143 to 145 (KDQ). C193 functions as the Cysteine persulfide intermediate in the catalytic mechanism. Residues 298 to 299 (RY) are interaction with tRNA.

It belongs to the MnmA/TRMU family.

The protein resides in the cytoplasm. The catalysed reaction is S-sulfanyl-L-cysteinyl-[protein] + uridine(34) in tRNA + AH2 + ATP = 2-thiouridine(34) in tRNA + L-cysteinyl-[protein] + A + AMP + diphosphate + H(+). Its function is as follows. Catalyzes the 2-thiolation of uridine at the wobble position (U34) of tRNA, leading to the formation of s(2)U34. The protein is tRNA-specific 2-thiouridylase MnmA of Nitratidesulfovibrio vulgaris (strain DSM 19637 / Miyazaki F) (Desulfovibrio vulgaris).